The sequence spans 117 residues: Large ribosomal subunit protein bL19 (117 aa).

It belongs to the bacterial ribosomal protein bL19 family.

Functionally, this protein is located at the 30S-50S ribosomal subunit interface and may play a role in the structure and function of the aminoacyl-tRNA binding site. The sequence is that of Large ribosomal subunit protein bL19 from Mycoplasmopsis pulmonis (strain UAB CTIP) (Mycoplasma pulmonis).